Here is a 161-residue protein sequence, read N- to C-terminus: 2-C-methyl-D-erythritol 2,4-cyclodiphosphate synthase (161 aa).

A divalent metal cation contacts are provided by aspartate 10 and histidine 12. 4-CDP-2-C-methyl-D-erythritol 2-phosphate-binding positions include 10 to 12 and 36 to 37; these read DVH and HS. An a divalent metal cation-binding site is contributed by histidine 44. Residues 58–60, 134–137, phenylalanine 141, and arginine 144 each bind 4-CDP-2-C-methyl-D-erythritol 2-phosphate; these read DIG and TTTE.

It belongs to the IspF family. Homotrimer. The cofactor is a divalent metal cation.

It carries out the reaction 4-CDP-2-C-methyl-D-erythritol 2-phosphate = 2-C-methyl-D-erythritol 2,4-cyclic diphosphate + CMP. It participates in isoprenoid biosynthesis; isopentenyl diphosphate biosynthesis via DXP pathway; isopentenyl diphosphate from 1-deoxy-D-xylulose 5-phosphate: step 4/6. Involved in the biosynthesis of isopentenyl diphosphate (IPP) and dimethylallyl diphosphate (DMAPP), two major building blocks of isoprenoid compounds. Catalyzes the conversion of 4-diphosphocytidyl-2-C-methyl-D-erythritol 2-phosphate (CDP-ME2P) to 2-C-methyl-D-erythritol 2,4-cyclodiphosphate (ME-CPP) with a corresponding release of cytidine 5-monophosphate (CMP). This is 2-C-methyl-D-erythritol 2,4-cyclodiphosphate synthase from Parabacteroides distasonis (strain ATCC 8503 / DSM 20701 / CIP 104284 / JCM 5825 / NCTC 11152).